The chain runs to 241 residues: MIELGINIDHVATLRQQRHTAYPDPLAAAVRAEDAGADLITLHLREDRRHIQDADVYAIRPRLRTRMNLECALTPEMLEIACAVKPSDVCLVPEKRAELTTEGGLDVLGQFDAVADAVALLTEAGIRVSLFIDPDAAQIEAAARAQAPVIELHTGAYAEAEGELAERELERIRAAVDVGLLHGLRVNAGHGLHYGNVQAVAAIDGISELNIGHAIVAQAVFDGWEKAIRDMKALMIQARAR.

N7 serves as a coordination point for 3-amino-2-oxopropyl phosphate. Position 9 to 10 (9 to 10 (DH)) interacts with 1-deoxy-D-xylulose 5-phosphate. R18 contributes to the 3-amino-2-oxopropyl phosphate binding site. The active-site Proton acceptor is H43. Residues R45 and H50 each contribute to the 1-deoxy-D-xylulose 5-phosphate site. The Proton acceptor role is filled by E70. Position 100 (T100) interacts with 1-deoxy-D-xylulose 5-phosphate. Residue H190 is the Proton donor of the active site. 3-amino-2-oxopropyl phosphate is bound by residues G191 and 212-213 (GH).

This sequence belongs to the PNP synthase family. As to quaternary structure, homooctamer; tetramer of dimers.

The protein resides in the cytoplasm. It carries out the reaction 3-amino-2-oxopropyl phosphate + 1-deoxy-D-xylulose 5-phosphate = pyridoxine 5'-phosphate + phosphate + 2 H2O + H(+). Its pathway is cofactor biosynthesis; pyridoxine 5'-phosphate biosynthesis; pyridoxine 5'-phosphate from D-erythrose 4-phosphate: step 5/5. In terms of biological role, catalyzes the complicated ring closure reaction between the two acyclic compounds 1-deoxy-D-xylulose-5-phosphate (DXP) and 3-amino-2-oxopropyl phosphate (1-amino-acetone-3-phosphate or AAP) to form pyridoxine 5'-phosphate (PNP) and inorganic phosphate. The chain is Pyridoxine 5'-phosphate synthase from Bordetella avium (strain 197N).